The chain runs to 83 residues: CLAVATA3/ESR (CLE)-related protein 20 (83 aa).

The signal sequence occupies residues 1 to 29 (MKNKNMNPSRPRLLCLIVFLFLVIVLSKA).

This sequence belongs to the CLV3/ESR signal peptide family. As to expression, mostly expressed in roots, seedlings, leaves, flowers, stems and apex, and, to a lower extent, in siliques and pollen.

Its subcellular location is the secreted. It localises to the extracellular space. Functionally, extracellular signal peptide that regulates cell fate. Represses root apical meristem maintenance. Inhibits irreversibly root growth by reducing cell division rates in the root apical meristem. Regulates the transition of protophloem cells from proliferation to differentiation, thus impinging on postembryonic growth capacity of the root meristem; this signaling pathway requires CRN and CLV2. The polypeptide is CLAVATA3/ESR (CLE)-related protein 20 (Arabidopsis thaliana (Mouse-ear cress)).